The chain runs to 557 residues: Potassium-transporting ATPase potassium-binding subunit (557 aa).

Helical transmembrane passes span Gly-5–Ser-25, Leu-63–Gly-83, Gly-132–Ile-152, Leu-170–Ile-190, Phe-253–Val-273, Leu-283–Val-303, Val-329–Ala-349, Ala-356–Val-376, Gly-379–Gly-399, Leu-416–Met-436, Leu-484–Ala-504, and Leu-526–Ala-546.

It belongs to the KdpA family. The system is composed of three essential subunits: KdpA, KdpB and KdpC.

Its subcellular location is the cell inner membrane. In terms of biological role, part of the high-affinity ATP-driven potassium transport (or Kdp) system, which catalyzes the hydrolysis of ATP coupled with the electrogenic transport of potassium into the cytoplasm. This subunit binds the periplasmic potassium ions and delivers the ions to the membrane domain of KdpB through an intramembrane tunnel. The chain is Potassium-transporting ATPase potassium-binding subunit from Escherichia coli (strain SMS-3-5 / SECEC).